We begin with the raw amino-acid sequence, 548 residues long: Alpha-1,3-mannosyl-glycoprotein 4-beta-N-acetylglucosaminyltransferase B (548 aa).

The Cytoplasmic portion of the chain corresponds to 1-7 (MRLRNGT). The chain crosses the membrane as a helical; Signal-anchor for type II membrane protein span at residues 8 to 28 (FLTLLLFCLCAFLSLSWYAAL). Residues 29-548 (SGQKGDVVDV…LSEIFLKKAD (520 aa)) are Lumenal-facing. Residues 36 to 83 (VDVYQREFLALRDRLHAAEQESLKRSKELNLVLDEIKRAVSERQALRD) adopt a coiled-coil conformation. Asn87 and Asn103 each carry an N-linked (GlcNAc...) asparagine glycan.

This sequence belongs to the glycosyltransferase 54 family. In terms of assembly, interacts with SLC35A3. It depends on a divalent metal cation as a cofactor. Post-translationally, N-glycosylated. In terms of tissue distribution, widely expressed. Strongly overexpressed in pancreatic cancer.

The protein localises to the golgi apparatus membrane. The enzyme catalyses an N(4)-{beta-D-GlcNAc-(1-&gt;2)-alpha-D-Man-(1-&gt;3)-[alpha-D-Man-(1-&gt;6)]-beta-D-Man-(1-&gt;4)-beta-D-GlcNAc-(1-&gt;4)-beta-D-GlcNAc}-L-asparaginyl-[protein] + UDP-N-acetyl-alpha-D-glucosamine = an N(4)-{beta-D-GlcNAc-(1-&gt;2)-[beta-D-GlcNAc-(1-&gt;4)]-alpha-D-Man-(1-&gt;3)-[alpha-D-Man-(1-&gt;6)]-beta-D-Man-(1-&gt;4)-beta-D-GlcNAc-(1-&gt;4)-beta-D-GlcNAc}-L-asparaginyl-[protein] + UDP + H(+). It catalyses the reaction N(4)-{beta-D-GlcNAc-(1-&gt;2)-alpha-D-Man-(1-&gt;3)-[beta-D-GlcNAc-(1-&gt;2)-alpha-D-Man-(1-&gt;6)]-beta-D-Man-(1-&gt;4)-beta-D-GlcNAc-(1-&gt;4)-beta-D-GlcNAc}-L-asparaginyl-[protein] + UDP-N-acetyl-alpha-D-glucosamine = N(4)-{beta-D-GlcNAc-(1-&gt;2)-[beta-D-GlcNAc-(1-&gt;4)]-alpha-D-Man-(1-&gt;3)-[beta-D-GlcNAc-(1-&gt;2)-alpha-D-Man-(1-&gt;6)]-beta-D-Man-(1-&gt;4)-beta-D-GlcNAc-(1-&gt;4)-beta-D-GlcNAc}-L-asparaginyl-[protein] + UDP + H(+). It carries out the reaction an N(4)-{beta-D-GlcNAc-(1-&gt;2)-alpha-D-Man-(1-&gt;3)-[beta-D-GlcNAc-(1-&gt;2)-[beta-D-GlcNAc-(1-&gt;6)]-alpha-D-Man-(1-&gt;6)]-beta-D-Man-(1-&gt;4)-beta-D-GlcNAc-(1-&gt;4)-beta-D-GlcNAc}-L-asparaginyl-[protein] + UDP-N-acetyl-alpha-D-glucosamine = an N(4)-{beta-D-GlcNAc-(1-&gt;2)-[beta-D-GlcNAc-(1-&gt;4)]-alpha-D-Man-(1-&gt;3)-[beta-D-GlcNAc-(1-&gt;2)-[beta-D-GlcNAc-(1-&gt;6)]-alpha-D-Man-(1-&gt;6)]-beta-D-Man-(1-&gt;4)-beta-D-GlcNAc-(1-&gt;4)-beta-D-GlcNAc}-L-asparaginyl-[protein] + UDP + H(+). The catalysed reaction is an N(4)-{beta-D-GlcNAc-(1-&gt;2)-alpha-D-Man-(1-&gt;3)-[beta-D-GlcNAc-(1-&gt;2)-alpha-D-Man-(1-&gt;6)]-beta-D-Man-(1-&gt;4)-beta-D-GlcNAc-(1-&gt;4)-[alpha-L-Fuc-(1-&gt;6)]-beta-D-GlcNAc}-L-asparaginyl-[protein] + UDP-N-acetyl-alpha-D-glucosamine = N(4)-{beta-D-GlcNAc-(1-&gt;2)-[beta-D-GlcNAc-(1-&gt;4)]-alpha-D-Man-(1-&gt;3)-[beta-D-GlcNAc-(1-&gt;2)-alpha-D-Man-(1-&gt;6)]-beta-D-Man-(1-&gt;4)-beta-D-GlcNAc-(1-&gt;4)-[alpha-L-Fuc-(1-&gt;6)]-beta-D-GlcNAc}-asparaginyl-[protein] + UDP + H(+). The enzyme catalyses an N(4)-{beta-D-GlcNAc-(1-&gt;2)-alpha-D-Man-(1-&gt;3)-[beta-D-Gal-(1-&gt;4)-beta-D-GlcNAc-(1-&gt;2)-alpha-D-Man-(1-&gt;6)]-beta-D-Man-(1-&gt;4)-beta-D-GlcNAc-(1-&gt;4)-beta-D-GlcNAc}-L-asparaginyl-[protein] + UDP-N-acetyl-alpha-D-glucosamine = an N(4)-{beta-D-GlcNAc-(1-&gt;2)-[beta-D-GlcNAc-(1-&gt;4)]-alpha-D-Man-(1-&gt;3)-[beta-D-Gal-(1-&gt;4)-beta-D-GlcNAc-(1-&gt;2)-alpha-D-Man-(1-&gt;6)]-beta-D-Man-(1-&gt;4)-beta-D-GlcNAc-(1-&gt;4)-beta-D-GlcNAc}-L-asparaginyl-[protein] + UDP + H(+). It catalyses the reaction N(4)-{beta-D-GlcNAc-(1-&gt;2)-alpha-D-Man-(1-&gt;3)-[alpha-D-Man-(1-&gt;3)-{alpha-D-Man-(1-&gt;6)}-alpha-D-Man-(1-&gt;6)]-beta-D-Man-(1-&gt;4)-beta-D-GlcNAc-(1-&gt;4)-beta-D-GlcNAc}-asparaginyl-[protein] + UDP-N-acetyl-alpha-D-glucosamine = N(4)-{beta-D-GlcNAc-(1-&gt;2)-[beta-D-GlcNAc-(1-&gt;4)]-alpha-D-Man-(1-&gt;3)-[alpha-D-Man-(1-&gt;3)-{alpha-D-Man-(1-&gt;6)}-alpha-D-Man-(1-&gt;6)]-beta-D-Man-(1-&gt;4)-beta-D-GlcNAc-(1-&gt;4)-beta-D-GlcNAc}-asparaginyl-[protein] + UDP + H(+). It carries out the reaction N(4)-{beta-D-GlcNAc-(1-&gt;2)-alpha-D-Man-(1-&gt;3)-beta-D-Man-(1-&gt;4)-beta-D-GlcNAc-(1-&gt;4)-beta-D-GlcNAc}-asparaginyl-[protein] + UDP-N-acetyl-alpha-D-glucosamine = N(4)-{beta-D-GlcNAc-(1-&gt;2)-[beta-D-GlcNAc-(1-&gt;4)]-alpha-D-Man-(1-&gt;3)-beta-D-Man-(1-&gt;4)-beta-D-GlcNAc-(1-&gt;4)-beta-D-GlcNAc}-asparaginyl-[protein] + UDP + H(+). It functions in the pathway protein modification; protein glycosylation. Functionally, glycosyltransferase that catalyzes the transfer of GlcNAc from UDP-GlcNAc to the GlcNAcbeta1-2Manalpha1-3 arm of the core structure of N-linked glycans through a beta1-4 linkage and participates in the production of tri- and tetra-antennary N-linked sugar chains. Prefers complex-type N-glycans over hybrid-types. Has lower affinities for donors or acceptors than MGAT4A, suggesting that, under physiological conditions, it is not the main contributor in N-glycan biosynthesis. The sequence is that of Alpha-1,3-mannosyl-glycoprotein 4-beta-N-acetylglucosaminyltransferase B from Homo sapiens (Human).